A 123-amino-acid polypeptide reads, in one-letter code: Keratin-associated protein 2-2 (123 aa).

The 11 X 5 AA repeats of C-C-[CDPQRWG]-[APRS]-[CIPSTVD] stretch occupies residues 5-112 (CCGSTFSSLS…SVQSPCGQPT (108 aa)).

This sequence belongs to the KRTAP type 2 family. As to quaternary structure, interacts with hair keratins.

In the hair cortex, hair keratin intermediate filaments are embedded in an interfilamentous matrix, consisting of hair keratin-associated proteins (KRTAP), which are essential for the formation of a rigid and resistant hair shaft through their extensive disulfide bond cross-linking with abundant cysteine residues of hair keratins. The matrix proteins include the high-sulfur and high-glycine-tyrosine keratins. This Homo sapiens (Human) protein is Keratin-associated protein 2-2 (KRTAP2-2).